Reading from the N-terminus, the 353-residue chain is Thrombopoietin (353 aa).

The first 21 residues, 1-21 (MELTELLLVVMLLLTARLTLS), serve as a signal peptide directing secretion. Serine 22 carries O-linked (GalNAc...) serine glycosylation. 2 disulfides stabilise this stretch: cysteine 28-cysteine 172 and cysteine 50-cysteine 106. O-linked (GalNAc...) threonine glycosylation is found at threonine 58, threonine 131, threonine 179, and threonine 180. Serine 184 carries an O-linked (GalNAc...) serine glycan. Residues asparagine 197 and asparagine 206 are each glycosylated (N-linked (GlcNAc...) (complex) asparagine). Residue threonine 213 is glycosylated (O-linked (GalNAc...) threonine). Residues asparagine 234 and asparagine 255 are each glycosylated (N-linked (GlcNAc...) (complex) asparagine). The tract at residues 257-353 (TRGLFPGPSR…THSQNLSQEG (97 aa)) is disordered. Serine 265 carries O-linked (GalNAc...) serine glycosylation. Polar residues predominate over residues 275 to 304 (SSGTSDTGSLPPNLQPGYSPSPTHPPTGQY). Positions 324-335 (LPDPSAPTPTPT) are enriched in pro residues. N-linked (GlcNAc...) asparagine glycosylation is found at asparagine 340 and asparagine 348. Residues 343-353 (YTHSQNLSQEG) are compositionally biased toward polar residues.

It belongs to the EPO/TPO family. As to quaternary structure, interacts with MPL/TPOR.

The protein localises to the secreted. Lineage-specific cytokine affecting the proliferation and maturation of megakaryocytes from their committed progenitor cells. It acts at a late stage of megakaryocyte development. It may be the major physiological regulator of circulating platelets. This Homo sapiens (Human) protein is Thrombopoietin (THPO).